Consider the following 901-residue polypeptide: Bifunctional protein STORR (901 aa).

The helical transmembrane segment at 12–32 threads the bilayer; it reads TSSVVALLLALVSILSSVVVL. Residue cysteine 513 coordinates heme.

In the N-terminal section; belongs to the cytochrome P450 family. The protein in the C-terminal section; belongs to the aldo/keto reductase family. It depends on heme as a cofactor.

Its subcellular location is the membrane. It carries out the reaction (R)-reticuline + NADP(+) = 1,2-dehydroreticuline + NADPH + H(+). The catalysed reaction is (S)-reticuline + reduced [NADPH--hemoprotein reductase] + O2 = 1,2-dehydroreticuline + oxidized [NADPH--hemoprotein reductase] + 2 H2O + H(+). The protein operates within alkaloid biosynthesis; morphine biosynthesis. In terms of biological role, bifunctional protein involved in the biosynthesis of morphinan-type benzylisoquinoline alkaloids. Required for the isomerization of (S)- to (R)-reticuline. The cytochrome P450 module is responsible for the conversion of (S)-reticuline to 1,2-dehydroreticuline while the oxidoreductase module converts 1,2-dehydroreticuline to (R)-reticuline. The protein is Bifunctional protein STORR of Papaver somniferum (Opium poppy).